Here is a 387-residue protein sequence, read N- to C-terminus: Formate-dependent phosphoribosylglycinamide formyltransferase (387 aa).

N(1)-(5-phospho-beta-D-ribosyl)glycinamide is bound by residues Glu21 to Leu22 and Glu81. ATP-binding positions include Arg113, Lys154, Ser159–Gln164, Glu193–Ile196, and Glu201. Residues Thr118–Leu306 form the ATP-grasp domain. Mg(2+) contacts are provided by Glu265 and Glu277. N(1)-(5-phospho-beta-D-ribosyl)glycinamide is bound by residues Asp284, Lys352, and Arg359–Arg360.

The protein belongs to the PurK/PurT family. In terms of assembly, homodimer.

The enzyme catalyses N(1)-(5-phospho-beta-D-ribosyl)glycinamide + formate + ATP = N(2)-formyl-N(1)-(5-phospho-beta-D-ribosyl)glycinamide + ADP + phosphate + H(+). The protein operates within purine metabolism; IMP biosynthesis via de novo pathway; N(2)-formyl-N(1)-(5-phospho-D-ribosyl)glycinamide from N(1)-(5-phospho-D-ribosyl)glycinamide (formate route): step 1/1. In terms of biological role, involved in the de novo purine biosynthesis. Catalyzes the transfer of formate to 5-phospho-ribosyl-glycinamide (GAR), producing 5-phospho-ribosyl-N-formylglycinamide (FGAR). Formate is provided by PurU via hydrolysis of 10-formyl-tetrahydrofolate. The protein is Formate-dependent phosphoribosylglycinamide formyltransferase of Wolinella succinogenes (strain ATCC 29543 / DSM 1740 / CCUG 13145 / JCM 31913 / LMG 7466 / NCTC 11488 / FDC 602W) (Vibrio succinogenes).